Here is a 269-residue protein sequence, read N- to C-terminus: Aquaporin-1 (269 aa).

At 1–11 the chain is on the cytoplasmic side; sequence MASEFKKKLFW. The chain crosses the membrane as a helical span at residues 12 to 29; sequence RAVVAEFLAMTLFVFISI. The Extracellular segment spans residues 30-46; that stretch reads GSALGFKYPVGNNQTAV. Asparagine 42 carries an N-linked (GlcNAc...) asparagine glycan. Residues 47–65 form a helical membrane-spanning segment; sequence QDNVKVSLAFGLSIATLAQ. The Cytoplasmic segment spans residues 66 to 68; the sequence is SVG. Residues 69–82 lie within the membrane without spanning it; sequence HISGAHLNPAVTLG. The short motif at 76 to 78 is the NPA 1 element; the sequence is NPA. The Cytoplasmic portion of the chain corresponds to 83–90; the sequence is LLLSCQIS. A helical transmembrane segment spans residues 91–109; that stretch reads IFRALMYIIAQCVGAIVAT. Residues 110–133 are Extracellular-facing; it reads AILSGITSSLPGNSLGRNDLADGV. The helical transmembrane segment at 134 to 153 threads the bilayer; the sequence is NSGQGLGIEIIGTLQLVLCV. At 154–163 the chain is on the cytoplasmic side; the sequence is LATTDRRRRD. Residues 164–181 traverse the membrane as a helical segment; the sequence is LGGSAPLAIGLSVALGHL. Over 182 to 186 the chain is Extracellular; it reads LAIDY. The stretch at 187-199 is an intramembrane region; it reads TGCGINPARSFGS. The NPA 2 motif lies at 192–194; that stretch reads NPA. Residues 200–206 are Extracellular-facing; it reads AVITHNF. N-linked (GlcNAc...) asparagine glycosylation is present at asparagine 205. The helical transmembrane segment at 207–224 threads the bilayer; sequence SNHWIFWVGPFIGGALAV. The Cytoplasmic segment spans residues 225–269; sequence LIYDFILAPRSSDFTDRVKVWTSGQVEEYDLDADDINSRVEMKPK. Phosphoserine is present on serine 247. Tyrosine 253 carries the phosphotyrosine modification. Serine 262 bears the Phosphoserine mark.

Belongs to the MIP/aquaporin (TC 1.A.8) family. As to quaternary structure, homotetramer; each monomer provides an independent water pore. Component of the ankyrin-1 complex in the erythrocyte, composed of ANK1, RHCE, RHAG, SLC4A1, EPB42, GYPA, GYPB and AQP1. Interacts with EPHB2; involved in endolymph production in the inner ear. Identified in a complex with STOM. Interacts (via the N-terminal) with ANK1 (via ANK 1-5 repeats). Interacts (via the C-terminal) with EPB42.

It is found in the cell membrane. It carries out the reaction H2O(in) = H2O(out). The enzyme catalyses nitric oxide(out) = nitric oxide(in). The catalysed reaction is CO2(out) = CO2(in). It catalyses the reaction glycerol(in) = glycerol(out). It carries out the reaction H2O2(out) = H2O2(in). The enzyme catalyses K(+)(in) = K(+)(out). The catalysed reaction is Na(+)(in) = Na(+)(out). Functionally, forms a water channel that facilitates the transport of water across cell membranes, playing a crucial role in water homeostasis in various tissues. Could also be permeable to small solutes including hydrogen peroxide, glycerol and gases such as amonnia (NH3), nitric oxide (NO) and carbon dioxide (CO2). Recruited to the ankyrin-1 complex, a multiprotein complex of the erythrocyte membrane, it could be part of a CO2 metabolon, linking facilitated diffusion of CO2 across the membrane, anion exchange of Cl(-)/HCO3(-) and interconversion of dissolved CO2 and carbonic acid in the cytosol. In vitro, it shows non-selective gated cation channel activity and may be permeable to cations like K(+) and Na(+) in vivo. The chain is Aquaporin-1 from Pongo abelii (Sumatran orangutan).